The sequence spans 281 residues: NADPH-dependent 7-cyano-7-deazaguanine reductase (281 aa).

Residue 88–90 (IES) participates in substrate binding. 90 to 91 (SK) contributes to the NADPH binding site. Residue C189 is the Thioimide intermediate of the active site. The active-site Proton donor is D196. Substrate is bound at residue 228 to 229 (HE). 257 to 258 (RG) is a binding site for NADPH.

This sequence belongs to the GTP cyclohydrolase I family. QueF type 2 subfamily. Homodimer.

It is found in the cytoplasm. The enzyme catalyses 7-aminomethyl-7-carbaguanine + 2 NADP(+) = 7-cyano-7-deazaguanine + 2 NADPH + 3 H(+). It functions in the pathway tRNA modification; tRNA-queuosine biosynthesis. Functionally, catalyzes the NADPH-dependent reduction of 7-cyano-7-deazaguanine (preQ0) to 7-aminomethyl-7-deazaguanine (preQ1). The chain is NADPH-dependent 7-cyano-7-deazaguanine reductase from Erwinia tasmaniensis (strain DSM 17950 / CFBP 7177 / CIP 109463 / NCPPB 4357 / Et1/99).